The following is a 275-amino-acid chain: Formamidopyrimidine-DNA glycosylase (275 aa).

Pro-2 serves as the catalytic Schiff-base intermediate with DNA. The Proton donor role is filled by Glu-3. Lys-58 serves as the catalytic Proton donor; for beta-elimination activity. His-93, Arg-111, and Arg-156 together coordinate DNA. The FPG-type zinc-finger motif lies at 241 to 275 (FVYDRAGLPCRVCGTPIRQIVQGQRSTYFCPTCQR). Arg-265 functions as the Proton donor; for delta-elimination activity in the catalytic mechanism.

It belongs to the FPG family. In terms of assembly, monomer. Zn(2+) serves as cofactor.

The enzyme catalyses Hydrolysis of DNA containing ring-opened 7-methylguanine residues, releasing 2,6-diamino-4-hydroxy-5-(N-methyl)formamidopyrimidine.. It catalyses the reaction 2'-deoxyribonucleotide-(2'-deoxyribose 5'-phosphate)-2'-deoxyribonucleotide-DNA = a 3'-end 2'-deoxyribonucleotide-(2,3-dehydro-2,3-deoxyribose 5'-phosphate)-DNA + a 5'-end 5'-phospho-2'-deoxyribonucleoside-DNA + H(+). In terms of biological role, involved in base excision repair of DNA damaged by oxidation or by mutagenic agents. Acts as a DNA glycosylase that recognizes and removes damaged bases. Has a preference for oxidized purines, such as 7,8-dihydro-8-oxoguanine (8-oxoG). Has AP (apurinic/apyrimidinic) lyase activity and introduces nicks in the DNA strand. Cleaves the DNA backbone by beta-delta elimination to generate a single-strand break at the site of the removed base with both 3'- and 5'-phosphates. This is Formamidopyrimidine-DNA glycosylase from Burkholderia ambifaria (strain MC40-6).